The sequence spans 611 residues: Actin-related protein 5 (611 aa).

Coiled-coil stretches lie at residues 290–329 (TLTS…LDRL) and 355–386 (SAEE…NIEV).

It belongs to the actin family. ARP5 subfamily. Component of the chromatin remodeling INO80 complex.

It is found in the nucleus. In terms of biological role, proposed core component of the chromatin remodeling INO80 complex which is involved in transcriptional regulation, DNA replication and probably DNA repair. The sequence is that of Actin-related protein 5 (ACTR5) from Gallus gallus (Chicken).